A 217-amino-acid polypeptide reads, in one-letter code: ATP-dependent Clp protease proteolytic subunit (217 aa).

Catalysis depends on serine 121, which acts as the Nucleophile. Histidine 146 is an active-site residue.

It belongs to the peptidase S14 family. Fourteen ClpP subunits assemble into 2 heptameric rings which stack back to back to give a disk-like structure with a central cavity, resembling the structure of eukaryotic proteasomes.

It localises to the cytoplasm. The catalysed reaction is Hydrolysis of proteins to small peptides in the presence of ATP and magnesium. alpha-casein is the usual test substrate. In the absence of ATP, only oligopeptides shorter than five residues are hydrolyzed (such as succinyl-Leu-Tyr-|-NHMec, and Leu-Tyr-Leu-|-Tyr-Trp, in which cleavage of the -Tyr-|-Leu- and -Tyr-|-Trp bonds also occurs).. Cleaves peptides in various proteins in a process that requires ATP hydrolysis. Has a chymotrypsin-like activity. Plays a major role in the degradation of misfolded proteins. This is ATP-dependent Clp protease proteolytic subunit from Burkholderia vietnamiensis (strain G4 / LMG 22486) (Burkholderia cepacia (strain R1808)).